Here is a 188-residue protein sequence, read N- to C-terminus: Elongation factor P 1 (188 aa).

It belongs to the elongation factor P family.

It is found in the cytoplasm. It functions in the pathway protein biosynthesis; polypeptide chain elongation. Its function is as follows. Involved in peptide bond synthesis. Stimulates efficient translation and peptide-bond synthesis on native or reconstituted 70S ribosomes in vitro. Probably functions indirectly by altering the affinity of the ribosome for aminoacyl-tRNA, thus increasing their reactivity as acceptors for peptidyl transferase. This chain is Elongation factor P 1, found in Mesorhizobium japonicum (strain LMG 29417 / CECT 9101 / MAFF 303099) (Mesorhizobium loti (strain MAFF 303099)).